The following is a 607-amino-acid chain: UvrABC system protein C (607 aa).

Residues 14–93 (HKPGVYLMLD…IKKHKPRYNI (80 aa)) enclose the GIY-YIG domain. One can recognise a UVR domain in the interval 203–238 (RDLLAELKRQMLQASERLNFEQAGQFRDQIRALKTT).

This sequence belongs to the UvrC family. In terms of assembly, interacts with UvrB in an incision complex.

Its subcellular location is the cytoplasm. Its function is as follows. The UvrABC repair system catalyzes the recognition and processing of DNA lesions. UvrC both incises the 5' and 3' sides of the lesion. The N-terminal half is responsible for the 3' incision and the C-terminal half is responsible for the 5' incision. The protein is UvrABC system protein C of Desulfotalea psychrophila (strain LSv54 / DSM 12343).